Here is a 239-residue protein sequence, read N- to C-terminus: tRNA (guanine-N(1)-)-methyltransferase (239 aa).

S-adenosyl-L-methionine-binding positions include Gly-109 and 133 to 138 (IGDYVL). Disordered stretches follow at residues 163–187 (PASR…YTRP) and 217–239 (QRTR…DPGR). Composition is skewed to basic and acidic residues over residues 165 to 180 (SRHD…RRLE) and 217 to 226 (QRTRERRPEL).

This sequence belongs to the RNA methyltransferase TrmD family. As to quaternary structure, homodimer.

The protein resides in the cytoplasm. It carries out the reaction guanosine(37) in tRNA + S-adenosyl-L-methionine = N(1)-methylguanosine(37) in tRNA + S-adenosyl-L-homocysteine + H(+). Functionally, specifically methylates guanosine-37 in various tRNAs. The polypeptide is tRNA (guanine-N(1)-)-methyltransferase (Mycolicibacterium paratuberculosis (strain ATCC BAA-968 / K-10) (Mycobacterium paratuberculosis)).